We begin with the raw amino-acid sequence, 254 residues long: Putative cysteine-rich repeat secretory protein 37 (254 aa).

Residues 1–29 (MYSSYSLSKRLVSIPILAIQLLLIRSVSS) form the signal peptide. 2 consecutive Gnk2-homologous domains span residues 36–138 (YLNH…SIRS) and 145–251 (YRNV…LYPF).

The protein belongs to the cysteine-rich repeat secretory protein family.

The protein localises to the secreted. This chain is Putative cysteine-rich repeat secretory protein 37 (CRRSP37), found in Arabidopsis thaliana (Mouse-ear cress).